The chain runs to 46 residues: MRTNFEKFTKRDSVVNEQGEQWQERRDRMKKRHKQQRGNSQKREWN.

The segment covering 1–14 has biased composition (basic and acidic residues); sequence MRTNFEKFTKRDSV. Residues 1 to 46 are disordered; that stretch reads MRTNFEKFTKRDSVVNEQGEQWQERRDRMKKRHKQQRGNSQKREWN.

In terms of biological role, the function of this early gene protein is unknown. The sequence is that of Gene 1.1 protein (1.1) from Escherichia coli (Bacteriophage T3).